A 435-amino-acid chain; its full sequence is 3-phosphoshikimate 1-carboxyvinyltransferase (435 aa).

The 3-phosphoshikimate site is built by K22, S23, and R27. Phosphoenolpyruvate is bound at residue K22. G95 and R123 together coordinate phosphoenolpyruvate. Residues S168, Q170, D319, and K346 each contribute to the 3-phosphoshikimate site. Q170 lines the phosphoenolpyruvate pocket. The Proton acceptor role is filled by D319. 2 residues coordinate phosphoenolpyruvate: R350 and R393.

It belongs to the EPSP synthase family. In terms of assembly, monomer.

It localises to the cytoplasm. The enzyme catalyses 3-phosphoshikimate + phosphoenolpyruvate = 5-O-(1-carboxyvinyl)-3-phosphoshikimate + phosphate. The protein operates within metabolic intermediate biosynthesis; chorismate biosynthesis; chorismate from D-erythrose 4-phosphate and phosphoenolpyruvate: step 6/7. Its function is as follows. Catalyzes the transfer of the enolpyruvyl moiety of phosphoenolpyruvate (PEP) to the 5-hydroxyl of shikimate-3-phosphate (S3P) to produce enolpyruvyl shikimate-3-phosphate and inorganic phosphate. The sequence is that of 3-phosphoshikimate 1-carboxyvinyltransferase from Chloroflexus aurantiacus (strain ATCC 29364 / DSM 637 / Y-400-fl).